A 136-amino-acid polypeptide reads, in one-letter code: Large ribosomal subunit protein eL27 (136 aa).

In terms of domain architecture, KOW spans 5–40 (MKPGKVVMVLAGRYAGRKAVIVKNIDDGTADRPYSH).

This sequence belongs to the eukaryotic ribosomal protein eL27 family. As to quaternary structure, component of the large ribosomal subunit.

The protein resides in the cytoplasm. Its subcellular location is the cytosol. The protein localises to the rough endoplasmic reticulum. Component of the large ribosomal subunit. In Ictalurus punctatus (Channel catfish), this protein is Large ribosomal subunit protein eL27 (rpl27).